Here is a 430-residue protein sequence, read N- to C-terminus: Adenylosuccinate synthetase (430 aa).

Residues 12–18 (GDEGKGK) and 40–42 (GHT) contribute to the GTP site. Residue D13 is the Proton acceptor of the active site. Mg(2+) is bound by residues D13 and G40. Residues 13 to 16 (DEGK), 38 to 41 (NAGH), T128, R142, Q223, T238, and R302 contribute to the IMP site. H41 acts as the Proton donor in catalysis. 298-304 (TTTGRPR) lines the substrate pocket. Residues R304, 330–332 (SID), and 412–414 (SVG) contribute to the GTP site.

Belongs to the adenylosuccinate synthetase family. Homodimer. Requires Mg(2+) as cofactor.

The protein localises to the cytoplasm. It carries out the reaction IMP + L-aspartate + GTP = N(6)-(1,2-dicarboxyethyl)-AMP + GDP + phosphate + 2 H(+). Its pathway is purine metabolism; AMP biosynthesis via de novo pathway; AMP from IMP: step 1/2. Plays an important role in the de novo pathway of purine nucleotide biosynthesis. Catalyzes the first committed step in the biosynthesis of AMP from IMP. This is Adenylosuccinate synthetase from Streptococcus equi subsp. equi (strain 4047).